The following is a 318-amino-acid chain: Aspartate carbamoyltransferase catalytic subunit (318 aa).

Residues Arg66 and Thr67 each contribute to the carbamoyl phosphate site. Residue Lys94 participates in L-aspartate binding. The carbamoyl phosphate site is built by Arg116, His144, and Gln147. Positions 177 and 231 each coordinate L-aspartate. Positions 272 and 273 each coordinate carbamoyl phosphate.

The protein belongs to the aspartate/ornithine carbamoyltransferase superfamily. ATCase family. Heterododecamer (2C3:3R2) of six catalytic PyrB chains organized as two trimers (C3), and six regulatory PyrI chains organized as three dimers (R2).

The catalysed reaction is carbamoyl phosphate + L-aspartate = N-carbamoyl-L-aspartate + phosphate + H(+). Its pathway is pyrimidine metabolism; UMP biosynthesis via de novo pathway; (S)-dihydroorotate from bicarbonate: step 2/3. In terms of biological role, catalyzes the condensation of carbamoyl phosphate and aspartate to form carbamoyl aspartate and inorganic phosphate, the committed step in the de novo pyrimidine nucleotide biosynthesis pathway. The polypeptide is Aspartate carbamoyltransferase catalytic subunit (Frankia casuarinae (strain DSM 45818 / CECT 9043 / HFP020203 / CcI3)).